A 117-amino-acid chain; its full sequence is Photosystem II reaction center Psb28 protein (117 aa).

The protein belongs to the Psb28 family. Part of the photosystem II complex.

The protein localises to the cellular thylakoid membrane. The chain is Photosystem II reaction center Psb28 protein from Prochlorococcus marinus (strain MIT 9211).